The sequence spans 451 residues: Signal transduction histidine-protein kinase ArlS (451 aa).

A run of 2 helical transmembrane segments spans residues 11-31 (IIVTTMITFVTIFLFCLIIIF) and 156-176 (IIALAFGVIATIITATISYVF). The region spanning 178–231 (TQITKPLVSLSNKMIEIRRDGFQNKLQLNTNYEEIDNLANTFNEMMSQIEESFN) is the HAMP domain. One can recognise a Histidine kinase domain in the interval 239–451 (DASHELRTPL…NKGTTFKIIF (213 aa)). A Phosphohistidine; by autocatalysis modification is found at His242.

Autophosphorylated.

The protein localises to the cell membrane. It catalyses the reaction ATP + protein L-histidine = ADP + protein N-phospho-L-histidine.. Its function is as follows. Member of the two-component regulatory system ArlS/ArlR involved in the regulation of adhesion, autolysis, multidrug resistance and virulence. ArlS probably functions as a sensor protein kinase which is autophosphorylated at a histidine residue and transfers its phosphate group to ArlR. This is Signal transduction histidine-protein kinase ArlS (arlS) from Staphylococcus aureus (strain MRSA252).